The chain runs to 370 residues: Biotin synthase (370 aa).

The 227-residue stretch at 50 to 276 folds into the Radical SAM core domain; that stretch reads FSDGTVDACS…IAVYRFLHPE (227 aa). Residues Cys68, Cys72, and Cys75 each contribute to the [4Fe-4S] cluster site. Positions 208 and 280 each coordinate [2Fe-2S] cluster. Residues 328-370 form a disordered region; it reads AGLEPNREANTFDPESVKARHRSPAAETASNANRTNATTETDD. Residues 352–370 show a composition bias toward low complexity; the sequence is AAETASNANRTNATTETDD.

The protein belongs to the radical SAM superfamily. Biotin synthase family. In terms of assembly, homodimer. Requires [4Fe-4S] cluster as cofactor. [2Fe-2S] cluster serves as cofactor.

The enzyme catalyses (4R,5S)-dethiobiotin + (sulfur carrier)-SH + 2 reduced [2Fe-2S]-[ferredoxin] + 2 S-adenosyl-L-methionine = (sulfur carrier)-H + biotin + 2 5'-deoxyadenosine + 2 L-methionine + 2 oxidized [2Fe-2S]-[ferredoxin]. Its pathway is cofactor biosynthesis; biotin biosynthesis; biotin from 7,8-diaminononanoate: step 2/2. Its function is as follows. Catalyzes the conversion of dethiobiotin (DTB) to biotin by the insertion of a sulfur atom into dethiobiotin via a radical-based mechanism. The chain is Biotin synthase from Natronomonas pharaonis (strain ATCC 35678 / DSM 2160 / CIP 103997 / JCM 8858 / NBRC 14720 / NCIMB 2260 / Gabara) (Halobacterium pharaonis).